A 691-amino-acid polypeptide reads, in one-letter code: Elongation factor G (691 aa).

Positions 8 to 282 constitute a tr-type G domain; sequence ERVRNIGIAA…AVVDYLPAPI (275 aa). GTP contacts are provided by residues 17–24, 81–85, and 135–138; these read AHIDAGKT, DTPGH, and NKMD.

This sequence belongs to the TRAFAC class translation factor GTPase superfamily. Classic translation factor GTPase family. EF-G/EF-2 subfamily.

It is found in the cytoplasm. Functionally, catalyzes the GTP-dependent ribosomal translocation step during translation elongation. During this step, the ribosome changes from the pre-translocational (PRE) to the post-translocational (POST) state as the newly formed A-site-bound peptidyl-tRNA and P-site-bound deacylated tRNA move to the P and E sites, respectively. Catalyzes the coordinated movement of the two tRNA molecules, the mRNA and conformational changes in the ribosome. The sequence is that of Elongation factor G from Synechococcus sp. (strain CC9902).